We begin with the raw amino-acid sequence, 949 residues long: Syndetin (949 aa).

A disordered region spans residues 1–28; the sequence is MQKIKSLMTRQGLRSPQESVHDLSPIEN. Residues 8 to 18 show a composition bias toward polar residues; the sequence is MTRQGLRSPQE. Coiled coils occupy residues 82-104 and 198-226; these read SLQE…LERV and YSCI…LSKI. A disordered region spans residues 509-581; sequence FEIQADSKDD…ETLRSRKKSD (73 aa). Over residues 569 to 581 the composition is skewed to basic and acidic residues; the sequence is VSRETLRSRKKSD.

This sequence belongs to the syndetin family. In terms of assembly, component of the endosome-associated retrograde protein (EARP) complex.

The protein localises to the recycling endosome. Its subcellular location is the membrane. Functionally, acts as a component of the EARP complex that is involved in endocytic recycling. The EARP complex associates with Rab4-positive endosomes and promotes recycling of internalized transferrin receptor (TFRC) to the plasma membrane. The chain is Syndetin from Gallus gallus (Chicken).